The sequence spans 242 residues: Small ribosomal subunit protein uS7m (242 aa).

The transit peptide at 1–37 directs the protein to the mitochondrion; that stretch reads MAAPALRAPLRWSGLALGVRCAVWNLPGLTQVRGSRY. Lys-228 is modified (N6-acetyllysine).

The protein belongs to the universal ribosomal protein uS7 family. Component of the mitochondrial ribosome small subunit (28S) which comprises a 12S rRNA and about 30 distinct proteins.

The protein resides in the mitochondrion. The sequence is that of Small ribosomal subunit protein uS7m (Mrps7) from Mus musculus (Mouse).